The chain runs to 156 residues: ATP synthase subunit b (156 aa).

The chain crosses the membrane as a helical span at residues 11-31 (AIAFAVFVWFCMKYVWPPLLA).

The protein belongs to the ATPase B chain family. As to quaternary structure, F-type ATPases have 2 components, F(1) - the catalytic core - and F(0) - the membrane proton channel. F(1) has five subunits: alpha(3), beta(3), gamma(1), delta(1), epsilon(1). F(0) has three main subunits: a(1), b(2) and c(10-14). The alpha and beta chains form an alternating ring which encloses part of the gamma chain. F(1) is attached to F(0) by a central stalk formed by the gamma and epsilon chains, while a peripheral stalk is formed by the delta and b chains.

It is found in the cell inner membrane. Functionally, f(1)F(0) ATP synthase produces ATP from ADP in the presence of a proton or sodium gradient. F-type ATPases consist of two structural domains, F(1) containing the extramembraneous catalytic core and F(0) containing the membrane proton channel, linked together by a central stalk and a peripheral stalk. During catalysis, ATP synthesis in the catalytic domain of F(1) is coupled via a rotary mechanism of the central stalk subunits to proton translocation. Its function is as follows. Component of the F(0) channel, it forms part of the peripheral stalk, linking F(1) to F(0). The chain is ATP synthase subunit b from Psychromonas ingrahamii (strain DSM 17664 / CCUG 51855 / 37).